The sequence spans 444 residues: Protein kinase C and casein kinase substrate in neurons protein 1 (444 aa).

Phosphoserine is present on residues serine 2 and serine 79. Residues 13–283 (EETTDSFWEV…AIRGADAQED (271 aa)) enclose the F-BAR domain. The stretch at 26-275 (KRTVKRIDDG…HVYRELEQAI (250 aa)) forms a coiled coil. Disordered stretches follow at residues 173 to 194 (REMNSKSEQSVTPEQQKKLQDK) and 309 to 386 (LPHT…DDSK). Residue threonine 184 is modified to Phosphothreonine. Residues 314–324 (TKKEKQPKKAE) are compositionally biased toward basic and acidic residues. A compositionally biased stretch (polar residues) spans 329–351 (TNATGAVESTSQAGDRGSVSSYD). Residues serine 346, serine 348, serine 349, serine 361, and serine 365 each carry the phosphoserine modification. Positions 385 to 444 (SKGVRVRALYDYDGQEQDELSFKAGDELTKLGEEDEQGWCRGRLDSGQLGLYPANYVEAI) constitute an SH3 domain. Tyrosine 394 is modified (phosphotyrosine). Serine 405 and serine 430 each carry phosphoserine.

It belongs to the PACSIN family. As to quaternary structure, homodimer. May form heterooligomers with other PACSINs. Interacts with both COBL and DBNL. Identified in a complex composed of COBL, PACSIN1 and WASL. Interacts (via SH3 domain) with SYNJ1 and WASL. Interacts (via SH3 domain) with DNM1; the interaction is reduced by DNM1 phosphorylation. Interacts with DNM2 and DNM3. Interacts with MAPT. Interacts with EHD1 and EHD3. Interacts with TRPV4. Post-translationally, phosphorylated by casein kinase 2 (CK2) and protein kinase C (PKC).

It is found in the cytoplasm. The protein localises to the cell projection. The protein resides in the synapse. It localises to the synaptosome. Its subcellular location is the ruffle membrane. It is found in the membrane. The protein localises to the cytoplasmic vesicle membrane. The protein resides in the cytosol. It localises to the cell membrane. Functionally, binds to membranes via its F-BAR domain and mediates membrane tubulation. Plays a role in the reorganization of the microtubule cytoskeleton via its interaction with MAPT; this decreases microtubule stability and inhibits MAPT-induced microtubule polymerization. Plays a role in cellular transport processes by recruiting DNM1, DNM2 and DNM3 to membranes. Plays a role in the reorganization of the actin cytoskeleton and in neuron morphogenesis via its interaction with COBL and WASL, and by recruiting COBL to the cell cortex. Plays a role in the regulation of neurite formation, neurite branching and the regulation of neurite length. Required for normal synaptic vesicle endocytosis; this process retrieves previously released neurotransmitters to accommodate multiple cycles of neurotransmission. Required for normal excitatory and inhibitory synaptic transmission. This Pongo abelii (Sumatran orangutan) protein is Protein kinase C and casein kinase substrate in neurons protein 1 (Pacsin1).